A 345-amino-acid polypeptide reads, in one-letter code: Molybdate/tungstate import ATP-binding protein WtpC (345 aa).

Residues 2–231 (LKVESISKDY…PKSEEVARFL (230 aa)) form the ABC transporter domain. ATP is bound at residue 33–40 (GPSGSGKT). The Mop domain maps to 280–345 (KTSARNVFKA…FKASAIHVFP (66 aa)).

The protein belongs to the ABC transporter superfamily. Sulfate/tungstate importer (TC 3.A.1.6) family. In terms of assembly, the complex is composed of two ATP-binding proteins (WtpC), two transmembrane proteins (WtpB) and a solute-binding protein (WtpA).

The protein localises to the cell membrane. The catalysed reaction is tungstate(in) + ATP + H2O = tungstate(out) + ADP + phosphate + H(+). Its function is as follows. Part of the ABC transporter complex WtpABC involved in molybdate/tungstate import. Responsible for energy coupling to the transport system. The polypeptide is Molybdate/tungstate import ATP-binding protein WtpC (wtpC) (Pyrococcus horikoshii (strain ATCC 700860 / DSM 12428 / JCM 9974 / NBRC 100139 / OT-3)).